Here is a 317-residue protein sequence, read N- to C-terminus: 3'-5' exoribonuclease YhaM (317 aa).

A DNA-binding region (OB) is located at residues 17-90; it reads FLLIKESTRG…QLKILSIRLS (74 aa). Residues 163–279 form the HD domain; that stretch reads HVVSMLAIGK…LHLIDLIDAK (117 aa).

It belongs to the YhaM family.

Its function is as follows. Shows a 3'-5' exoribonuclease activity. The chain is 3'-5' exoribonuclease YhaM from Oceanobacillus iheyensis (strain DSM 14371 / CIP 107618 / JCM 11309 / KCTC 3954 / HTE831).